The primary structure comprises 154 residues: UPF0225 protein SG1365 (154 aa).

The protein belongs to the UPF0225 family.

This is UPF0225 protein SG1365 from Sodalis glossinidius (strain morsitans).